Consider the following 330-residue polypeptide: Aspartate--ammonia ligase (330 aa).

It belongs to the class-II aminoacyl-tRNA synthetase family. AsnA subfamily.

Its subcellular location is the cytoplasm. The catalysed reaction is L-aspartate + NH4(+) + ATP = L-asparagine + AMP + diphosphate + H(+). Its pathway is amino-acid biosynthesis; L-asparagine biosynthesis; L-asparagine from L-aspartate (ammonia route): step 1/1. This Histophilus somni (strain 2336) (Haemophilus somnus) protein is Aspartate--ammonia ligase.